We begin with the raw amino-acid sequence, 819 residues long: Endonuclease MutS2 (819 aa).

339 to 346 (GPNTGGKT) provides a ligand contact to ATP. Residues 744–819 (VDVRGLRVDE…GAGVTVAELA (76 aa)) enclose the Smr domain.

The protein belongs to the DNA mismatch repair MutS family. MutS2 subfamily. As to quaternary structure, homodimer. Binds to stalled ribosomes, contacting rRNA.

Its function is as follows. Endonuclease that is involved in the suppression of homologous recombination and thus may have a key role in the control of bacterial genetic diversity. Functionally, acts as a ribosome collision sensor, splitting the ribosome into its 2 subunits. Detects stalled/collided 70S ribosomes which it binds and splits by an ATP-hydrolysis driven conformational change. Acts upstream of the ribosome quality control system (RQC), a ribosome-associated complex that mediates the extraction of incompletely synthesized nascent chains from stalled ribosomes and their subsequent degradation. Probably generates substrates for RQC. The sequence is that of Endonuclease MutS2 from Gemmatimonas aurantiaca (strain DSM 14586 / JCM 11422 / NBRC 100505 / T-27).